The chain runs to 240 residues: MDEEVENKVILHGSFASPYSKRIELALRLKSIPYQFVQEDLQNKSQTLLRYNPVHKKIPVLVHNGKPISESLFIIEYIDETWSNGPHILPEDPYRRSKVRFWANYIQLHLYDLVIKVVKSEGEEQKKALTEVKEKLSVIEKEGLKEIFSDTDGEPTVTNETMSLVDIVMCTLLSPYKAHEEVLGLKIIDPEIVPGVYGWINAINETSVVKDLSPPYEQILEILRAFRQMSLSPVLETYQS.

The region spanning N7–P86 is the GST N-terminal domain. Residues S17–P18, N43–K44, K57–I58, and E70–S71 each bind glutathione. Residues D92–F226 enclose the GST C-terminal domain. Phosphothreonine is present on T161.

This sequence belongs to the GST superfamily. Tau family.

The protein resides in the cytoplasm. It localises to the cytosol. The catalysed reaction is RX + glutathione = an S-substituted glutathione + a halide anion + H(+). Functionally, may be involved in the conjugation of reduced glutathione to a wide number of exogenous and endogenous hydrophobic electrophiles and have a detoxification role against certain herbicides. The polypeptide is Glutathione S-transferase U9 (GSTU9) (Arabidopsis thaliana (Mouse-ear cress)).